Consider the following 1889-residue polypeptide: MILKSFIPGNLISLYMTIINSVVMVGLYYGFLTTLSIGPSYIFLLRARFMEEGEEGTEKRVSATTGFIAGQLMMFISIYYVPLHLALGKPHTITVLALPYLLFHFFWNNHKDFFDHRRPTRNSMRNLSIQCVFLNNLIIQLFNHFILPSSMLARLVNIYMFRCNNNMLFVTSSFVGWLIGHILLMKWVGLVLVWIQQNNLIRSNVLIRSNKYLVSEFRNSMARIFSILLFITCVYYLGRIPSPILTKKLKGISEPEEVGESEEERNIEIETISEGGGANQKQGTEENTSSSLFSEEEVDPSKETEKLRVTGKKKKKIKGEFHFRFKETYYKNRPVYETSYLDGNQESSKLEILKKKEDKYLLWIEKPLVTLLFDSKRWNRPLRYIKNDRVENAIKNEMSQYFFYTCQSDGKEKISFTYPPSLATFGEMIQKKIYFFTPEKWFSDELYTDWSFINELKRRNLSKEFIKRVESLDKESFDLGILEKRTRFSNNETKREYLPKLYDPFLHGPYRGRIKKWGSPLSINQTYKKKNTDPSWINKIHALLLTTDYHDLEQTLDTLNIKSLATEKELSLLTLTEDEQGDSEDRVKILKFLFNIVITNPNNQTIRKKSIGIKEISKKVPRWSYKLIDDLEQQEGENEENVTAEHEIRSRKSKRVVIFTNNQANADTYTNTKDAIDPDQTDEVALIRYSQQSDFRRDIIKGSMRAQRRKTITWELFQANVHSPLCLDRVDKPLFFSFDISGPLKRISRNWICKNKESKISDYTEKKIEKKDEAKREKYKREEKMRIEIAEAWDSLLLAQVIRGSVLITQSILRKYIILPSLIIVKNIARMLLFQFPEWSEDLTDWNREMHVKCTYNGVQLSETEFPKNWLTDGIQIKILFPFCLKPWHRFKLQPSHKDPMKKKKGQKNDFCFLTVWGMETELPFGSPRKRRSFFEPIFKELKKKIKKWKTKCFIALTILKEKTKLFRKASKETKKWITQSILFLKGIIKELSKINPIPFFGLREPYELGETKKDSIISNKMIHKSSLQIQSMSWTNYSLTEKKIKDLTKRTNTIKNQIQKILIIKDKKNEFLTQEINSSSNKISYQDKILESSKKFWQIVKRRNIRLIRKFYFFINFFIEKIYMDILLYIINIPRTNTQLFLESTKKMIENFIHNNEANQERINKTTKNTTHFISTIKTSLSSLSNISIRNKNEKAFCDLSSLSQAYVFYKLSQTQVISFYKFKPILQYHGTSLFLKNEIKDYFEERGVSHSRLRHHYGLRQKIVWHSGMNEWKNWLRSRYQYDLVQNRWLKLGPGQWRNGVNQHYLAQNKHLPKWDSDEKERLIHYEKKNDFQANSLLTQEYKLNQEQKYKKSNFKKHYGYDFLSYKSINYQDKRDPYAYGSPFQVNKREESSYHYNMDKQNFFDTLRDIPIHNYLGEGDILDAMGNFSHRKFFNWRILDFCLRNKVDIESWVDTSTKSKKNIKTVVKNYQIIDKMDLFYFTIYQDQESNPSNKKGSHFDWMGLNEEILSHPIPNLELWFFPEFVLLYNAYKVKPWIIPIKLLLFNFNGNRNINKNIIENKKRDSLIAPNEKQIIGLENRNQEEKEPIGEGGLVSDAQKQGNFKSVLSNQEKDVEEDYDKSDKKKRRKKKQYKSNTEAELDFFLKRYLRFQLRWDDSLNQRIINNIKVYCLLLRLINPNEIVISSIQRGEMNLDILMIQKDLTLRELMKKGILIIDPVRLSVKNDGQFILYQTISILLVHKNKHQINQRYQEKNYIDKNHFYEFIARHQKMTENKDKNHYDLFVPENILSPNHRRELRIRISFNSRDKNGMHRNAVFLNNVKNCGQVLTKNKHLDSDKKKLIKLKFFLWPNYRLEDLACMNRYWFNTNNGSRFSMIRIRMYPRLKIR.

6 consecutive transmembrane segments (helical) span residues 11–31 (LISL…YYGF), 67–87 (FIAG…HLAL), 88–108 (GKPH…FFWN), 127–147 (LSIQ…HFIL), 175–195 (VGWL…LVWI), and 224–244 (IFSI…PSPI). Positions 255–265 (PEEVGESEEER) are enriched in acidic residues. 2 disordered regions span residues 255-303 (PEEV…PSKE) and 1610-1633 (SNQE…KKKQ). Positions 279–293 (NQKQGTEENTSSSLF) are enriched in polar residues.

This sequence belongs to the TIC214 family. As to quaternary structure, part of the Tic complex.

It localises to the plastid. The protein resides in the chloroplast inner membrane. Functionally, involved in protein precursor import into chloroplasts. May be part of an intermediate translocation complex acting as a protein-conducting channel at the inner envelope. The sequence is that of Protein TIC 214 from Gossypium barbadense (Sea Island cotton).